The primary structure comprises 433 residues: Elongation factor 1-alpha (433 aa).

The region spanning lysine 5 to leucine 220 is the tr-type G domain. The interval glycine 14 to serine 21 is G1. GTP is bound at residue glycine 14–serine 21. Residue serine 21 coordinates Mg(2+). The interval glycine 70–aspartate 74 is G2. The G3 stretch occupies residues aspartate 91 to glycine 94. GTP contacts are provided by residues aspartate 91–histidine 95 and asparagine 146–aspartate 149. Positions asparagine 146–aspartate 149 are G4. Residues alanine 186–phenylalanine 188 are G5.

Belongs to the TRAFAC class translation factor GTPase superfamily. Classic translation factor GTPase family. EF-Tu/EF-1A subfamily.

The protein resides in the cytoplasm. The catalysed reaction is GTP + H2O = GDP + phosphate + H(+). Functionally, GTP hydrolase that promotes the GTP-dependent binding of aminoacyl-tRNA to the A-site of ribosomes during protein biosynthesis. This Nanoarchaeum equitans (strain Kin4-M) protein is Elongation factor 1-alpha.